An 81-amino-acid chain; its full sequence is Large ribosomal subunit protein bL31B (81 aa).

It belongs to the bacterial ribosomal protein bL31 family. Type B subfamily. As to quaternary structure, part of the 50S ribosomal subunit.

This Pediococcus pentosaceus (strain ATCC 25745 / CCUG 21536 / LMG 10740 / 183-1w) protein is Large ribosomal subunit protein bL31B.